The following is a 464-amino-acid chain: Tyrosine aminotransferase (464 aa).

N6-(pyridoxal phosphate)lysine is present on K284.

This sequence belongs to the class-I pyridoxal-phosphate-dependent aminotransferase family. Homodimer. It depends on pyridoxal 5'-phosphate as a cofactor. Expressed in the muscle. Expressed in the hypodermis and intestine.

The enzyme catalyses L-tyrosine + 2-oxoglutarate = 3-(4-hydroxyphenyl)pyruvate + L-glutamate. It carries out the reaction 3-hydroxy-L-phenylalanine + 2-oxoglutarate = 3-(3-hydroxyphenyl)pyruvate + L-glutamate. The protein operates within amino-acid degradation; L-phenylalanine degradation; acetoacetate and fumarate from L-phenylalanine: step 2/6. Functionally, transaminase involved in tyrosine breakdown. Converts tyrosine to p-hydroxyphenylpyruvate. Has no transaminase activity towards phenylalanine. Plays protective role against oxidative stress, metabolizing meta-tyrosine and negatively regulating its accumulation. Plays a role in modulating the daf-2/insulin receptor-like transduction pathway through regulating tyrosine levels. Negatively regulates dauer formation. Plays a role in longevity. This Caenorhabditis elegans protein is Tyrosine aminotransferase.